A 469-amino-acid polypeptide reads, in one-letter code: Signal recognition particle 54 kDa protein (469 aa).

Residues 104–111, 184–188, and 242–245 each bind GTP; these read GLYGSGKT, DTAGR, and TKLD. Disordered stretches follow at residues 388 to 410 and 447 to 469; these read ELEN…SGKP and QQGG…PFGD. The segment covering 448–469 has biased composition (gly residues); it reads QGGGGGGGMGGMGGGGMGPFGD.

It belongs to the GTP-binding SRP family. SRP54 subfamily. Part of the signal recognition particle protein translocation system, which is composed of SRP and FtsY. Archaeal SRP consists of a 7S RNA molecule of 300 nucleotides and two protein subunits: SRP54 and SRP19.

It localises to the cytoplasm. The enzyme catalyses GTP + H2O = GDP + phosphate + H(+). Its function is as follows. Involved in targeting and insertion of nascent membrane proteins into the cytoplasmic membrane. Binds to the hydrophobic signal sequence of the ribosome-nascent chain (RNC) as it emerges from the ribosomes. The SRP-RNC complex is then targeted to the cytoplasmic membrane where it interacts with the SRP receptor FtsY. This Haloarcula marismortui (strain ATCC 43049 / DSM 3752 / JCM 8966 / VKM B-1809) (Halobacterium marismortui) protein is Signal recognition particle 54 kDa protein.